The chain runs to 323 residues: Protoheme IX farnesyltransferase (323 aa).

The next 8 helical transmembrane spans lie at 50–70 (IVLI…ANTF), 97–117 (NRDA…WLWL), 118–138 (LCDS…YIFV), 150–170 (NIVW…AVIV), 184–204 (AIVL…ALAM), 231–248 (IVWY…LIPA), 252–274 (IYAA…LHLG), and 293–313 (YLAV…ETIG).

This sequence belongs to the UbiA prenyltransferase family. Protoheme IX farnesyltransferase subfamily.

It is found in the cell membrane. It catalyses the reaction heme b + (2E,6E)-farnesyl diphosphate + H2O = Fe(II)-heme o + diphosphate. The protein operates within porphyrin-containing compound metabolism; heme O biosynthesis; heme O from protoheme: step 1/1. Functionally, converts heme B (protoheme IX) to heme O by substitution of the vinyl group on carbon 2 of heme B porphyrin ring with a hydroxyethyl farnesyl side group. The sequence is that of Protoheme IX farnesyltransferase from Corynebacterium glutamicum (strain R).